The sequence spans 188 residues: uncharacterized protein (188 aa).

The interval 121–142 (ADTLSRKNKRSSDQKRNGQHFE) is disordered. Residues 130-142 (RSSDQKRNGQHFE) are compositionally biased toward basic and acidic residues.

The protein belongs to the chlamydial CPn_0422/CT_273/TC_0545 family.

This is an uncharacterized protein from Chlamydia trachomatis serovar D (strain ATCC VR-885 / DSM 19411 / UW-3/Cx).